The following is a 344-amino-acid chain: Holliday junction branch migration complex subunit RuvB (344 aa).

The interval 1–181 is large ATPase domain (RuvB-L); sequence MERIVTPAEM…FGVLCAMEYY (181 aa). ATP is bound by residues Leu-20, Arg-21, Gly-62, Lys-65, Thr-66, Thr-67, 128–130, Arg-171, Tyr-181, and Arg-218; that span reads EDY. Position 66 (Thr-66) interacts with Mg(2+). The small ATPAse domain (RuvB-S) stretch occupies residues 182–252; that stretch reads DENQLKEIVI…EAREALELLE (71 aa). The tract at residues 255–344 is head domain (RuvB-H); sequence NQGFDKVDNK…SNKGQTSFFK (90 aa). Residues Arg-310 and Arg-315 each contribute to the DNA site.

This sequence belongs to the RuvB family. In terms of assembly, homohexamer. Forms an RuvA(8)-RuvB(12)-Holliday junction (HJ) complex. HJ DNA is sandwiched between 2 RuvA tetramers; dsDNA enters through RuvA and exits via RuvB. An RuvB hexamer assembles on each DNA strand where it exits the tetramer. Each RuvB hexamer is contacted by two RuvA subunits (via domain III) on 2 adjacent RuvB subunits; this complex drives branch migration. In the full resolvosome a probable DNA-RuvA(4)-RuvB(12)-RuvC(2) complex forms which resolves the HJ.

It is found in the cytoplasm. It carries out the reaction ATP + H2O = ADP + phosphate + H(+). In terms of biological role, the RuvA-RuvB-RuvC complex processes Holliday junction (HJ) DNA during genetic recombination and DNA repair, while the RuvA-RuvB complex plays an important role in the rescue of blocked DNA replication forks via replication fork reversal (RFR). RuvA specifically binds to HJ cruciform DNA, conferring on it an open structure. The RuvB hexamer acts as an ATP-dependent pump, pulling dsDNA into and through the RuvAB complex. RuvB forms 2 homohexamers on either side of HJ DNA bound by 1 or 2 RuvA tetramers; 4 subunits per hexamer contact DNA at a time. Coordinated motions by a converter formed by DNA-disengaged RuvB subunits stimulates ATP hydrolysis and nucleotide exchange. Immobilization of the converter enables RuvB to convert the ATP-contained energy into a lever motion, pulling 2 nucleotides of DNA out of the RuvA tetramer per ATP hydrolyzed, thus driving DNA branch migration. The RuvB motors rotate together with the DNA substrate, which together with the progressing nucleotide cycle form the mechanistic basis for DNA recombination by continuous HJ branch migration. Branch migration allows RuvC to scan DNA until it finds its consensus sequence, where it cleaves and resolves cruciform DNA. In Clostridium botulinum (strain Alaska E43 / Type E3), this protein is Holliday junction branch migration complex subunit RuvB.